The following is a 123-amino-acid chain: Large ribosomal subunit protein uL14c (123 aa).

This sequence belongs to the universal ribosomal protein uL14 family. In terms of assembly, part of the 50S ribosomal subunit.

Its subcellular location is the plastid. The protein localises to the chloroplast. Functionally, binds to 23S rRNA. The polypeptide is Large ribosomal subunit protein uL14c (Triticum aestivum (Wheat)).